A 222-amino-acid chain; its full sequence is Flagellar L-ring protein (222 aa).

An N-terminal signal peptide occupies residues 1 to 18 (MKTTRAIAMLGLLLGLAA). Cys19 carries the N-palmitoyl cysteine lipid modification. A lipid anchor (S-diacylglycerol cysteine) is attached at Cys19.

This sequence belongs to the FlgH family. As to quaternary structure, the basal body constitutes a major portion of the flagellar organelle and consists of four rings (L,P,S, and M) mounted on a central rod.

Its subcellular location is the cell outer membrane. It is found in the bacterial flagellum basal body. Its function is as follows. Assembles around the rod to form the L-ring and probably protects the motor/basal body from shearing forces during rotation. This Thiobacillus denitrificans (strain ATCC 25259 / T1) protein is Flagellar L-ring protein.